The following is a 338-amino-acid chain: Ferredoxin--NADP reductase (338 aa).

7 residues coordinate FAD: aspartate 38, glutamine 46, tyrosine 51, valine 91, phenylalanine 125, aspartate 291, and threonine 331.

Belongs to the ferredoxin--NADP reductase type 2 family. As to quaternary structure, homodimer. The cofactor is FAD.

The catalysed reaction is 2 reduced [2Fe-2S]-[ferredoxin] + NADP(+) + H(+) = 2 oxidized [2Fe-2S]-[ferredoxin] + NADPH. This Orientia tsutsugamushi (strain Ikeda) (Rickettsia tsutsugamushi) protein is Ferredoxin--NADP reductase.